The following is a 105-amino-acid chain: U-scoloptoxin(10)-Sm3a (105 aa).

The N-terminal stretch at 1-23 (MYKFIFIFFTVFFLINIIEESXT) is a signal peptide.

It belongs to the scoloptoxin-10 family. In terms of processing, contains 3 disulfide bonds. Expressed by the venom gland.

It localises to the secreted. This is U-scoloptoxin(10)-Sm3a from Scolopendra morsitans (Tanzanian blue ringleg centipede).